We begin with the raw amino-acid sequence, 251 residues long: uncharacterized protein (251 aa).

14 to 37 (VLGGTSAIGLATARRLIARGARLV) lines the NADP(+) pocket. A substrate-binding site is contributed by serine 145. Tyrosine 158 functions as the Proton acceptor in the catalytic mechanism.

The protein belongs to the short-chain dehydrogenases/reductases (SDR) family.

In terms of biological role, may be involved in the biosynthesis of a heptaene-type antibiotic. This is an uncharacterized protein from Streptomyces coelicolor.